The sequence spans 212 residues: Large ribosomal subunit protein uL3 (212 aa).

The segment covering 140–155 has biased composition (polar residues); that stretch reads SVSHRAIGSTGQNQSP. Residues 140–166 are disordered; sequence SVSHRAIGSTGQNQSPGKVFKGKKMPG. Glutamine 153 carries the post-translational modification N5-methylglutamine.

It belongs to the universal ribosomal protein uL3 family. In terms of assembly, part of the 50S ribosomal subunit. Forms a cluster with proteins L14 and L19. Post-translationally, methylated by PrmB.

One of the primary rRNA binding proteins, it binds directly near the 3'-end of the 23S rRNA, where it nucleates assembly of the 50S subunit. This chain is Large ribosomal subunit protein uL3, found in Psychrobacter cryohalolentis (strain ATCC BAA-1226 / DSM 17306 / VKM B-2378 / K5).